Reading from the N-terminus, the 415-residue chain is Serine hydroxymethyltransferase (415 aa).

Residues Leu120 and Gly124–Leu126 contribute to the (6S)-5,6,7,8-tetrahydrofolate site. Lys229 carries the post-translational modification N6-(pyridoxal phosphate)lysine.

It belongs to the SHMT family. In terms of assembly, homodimer. Pyridoxal 5'-phosphate serves as cofactor.

The protein resides in the cytoplasm. The enzyme catalyses (6R)-5,10-methylene-5,6,7,8-tetrahydrofolate + glycine + H2O = (6S)-5,6,7,8-tetrahydrofolate + L-serine. Its pathway is one-carbon metabolism; tetrahydrofolate interconversion. It participates in amino-acid biosynthesis; glycine biosynthesis; glycine from L-serine: step 1/1. Functionally, catalyzes the reversible interconversion of serine and glycine with tetrahydrofolate (THF) serving as the one-carbon carrier. This reaction serves as the major source of one-carbon groups required for the biosynthesis of purines, thymidylate, methionine, and other important biomolecules. Also exhibits THF-independent aldolase activity toward beta-hydroxyamino acids, producing glycine and aldehydes, via a retro-aldol mechanism. The protein is Serine hydroxymethyltransferase of Desulforudis audaxviator (strain MP104C).